Reading from the N-terminus, the 539-residue chain is Sodium/hydrogen exchanger 9B2 (539 aa).

The Cytoplasmic segment spans residues 1 to 94 (MEDSLFSVDK…ACPPQGCFSL (94 aa)). A helical membrane pass occupies residues 95 to 112 (AITNVTMVILIWAVVWSI). The Extracellular segment spans residues 113-121 (TGPECLPGG). The helical transmembrane segment at 122–141 (NLFGILALLFSAALGGKLIS) threads the bilayer. Topologically, residues 142 to 152 (LIKIPSLPPLP) are cytoplasmic. Residues 153–169 (PLLGMLLAGFLIRNIPV) form a helical membrane-spanning segment. Residues 170 to 179 (ITDQVQIHHK) are Extracellular-facing. The chain crosses the membrane as a helical span at residues 180 to 197 (WSAALRNIALAIILVRAG). Residues 198-208 (LGLDPKALRKL) lie on the Cytoplasmic side of the membrane. Residues 209-235 (KAVCLRLSFGPCVVESCTAAVVSHFIM) form a helical membrane-spanning segment. Residues 236–241 (GFPLTW) are Extracellular-facing. The chain crosses the membrane as a helical span at residues 242–250 (GFMLGFVLG). Over 251–278 (AVSPAVVVPSMLILQKEGFGVDKGIPTL) the chain is Cytoplasmic. Na(+) is bound by residues Val-252, Gly-283, Asp-286, and Asp-287. Residues 279 to 298 (LMAAGSFDDVLAITGFNTCL) traverse the membrane as a helical segment. At 299-308 (GMAFSSGSTL) the chain is on the extracellular side. A helical membrane pass occupies residues 309–332 (NTIVRGVLEVVVGIAAGLLFGFFL). The Cytoplasmic portion of the chain corresponds to 333–347 (HYFPSKDQENLKGKR). A helical transmembrane segment spans residues 348 to 365 (SYLILALSVFAVFGSLYF). Residues 366–369 (GFPG) lie on the Extracellular side of the membrane. The chain crosses the membrane as a helical span at residues 370–381 (SGGLCTLVMAFL). Residues 382–398 (AGIGWSTDKTVVEDIIA) lie on the Cytoplasmic side of the membrane. The chain crosses the membrane as a helical span at residues 399–419 (VSWDIFQPLLFGLIGAEISVA). Residues 420 to 425 (SLKPET) are Extracellular-facing. Residues 426-448 (VGLCTATLIIALIIRICISFLMV) form a helical membrane-spanning segment. At 449–469 (CFSGFSLKEKIFISLAWMPKA) the chain is on the cytoplasmic side. The helical transmembrane segment at 470–481 (TVQAAIGSVALD) threads the bilayer. Residues 482 to 494 (TARTLENKQFEDY) are Extracellular-facing. A helical transmembrane segment spans residues 495–517 (GMDVLTVAFLGILVTAPIGALVI). Residues 518–539 (GLTGPKMLEKSESRTVTEEGSV) lie on the Cytoplasmic side of the membrane.

It belongs to the monovalent cation:proton antiporter 1 (CPA1) transporter (TC 2.A.36) family. As to quaternary structure, homodimer; dimerization is essential for SLC9B2 activity. Lipids seem to play a role in the stabilization of the dimerization subdomain.

Its subcellular location is the cell membrane. The protein localises to the mitochondrion membrane. The protein resides in the endosome membrane. It is found in the recycling endosome membrane. It localises to the cytoplasmic vesicle. Its subcellular location is the secretory vesicle. The protein localises to the synaptic vesicle membrane. The protein resides in the basolateral cell membrane. It is found in the apical cell membrane. The enzyme catalyses Li(+)(out) + H(+)(in) = Li(+)(in) + H(+)(out). It carries out the reaction Li(+)(in) + Na(+)(out) = Li(+)(out) + Na(+)(in). It catalyses the reaction Na(+)(in) + H(+)(out) = Na(+)(out) + H(+)(in). Allosterically inhibited by the N-terminal domain. Inhibited by phloretin. Electroneutral Na(+) Li(+)/H(+) antiporter that extrudes Na(+) or Li(+) in exchange for external protons across the membrane. Uses the proton gradient/membrane potential to extrude sodium. Contributes to the regulation of intracellular pH and sodium homeostasis. Also able to mediate Na(+)/Li(+) antiporter activity in kidney. The sequence is that of Sodium/hydrogen exchanger 9B2 (slc9b2) from Xenopus tropicalis (Western clawed frog).